A 102-amino-acid chain; its full sequence is UPF0045 protein Mb1933 (102 aa).

The protein belongs to the UPF0045 family.

The sequence is that of UPF0045 protein Mb1933 from Mycobacterium bovis (strain ATCC BAA-935 / AF2122/97).